A 130-amino-acid polypeptide reads, in one-letter code: Small ribosomal subunit protein bS6 (130 aa).

The interval 96 to 130 (VTEASPMAKARDERDSRRSPSDDRIEEESAEENAE) is disordered. Positions 104 to 118 (KARDERDSRRSPSDD) are enriched in basic and acidic residues. Positions 119 to 130 (RIEEESAEENAE) are enriched in acidic residues.

This sequence belongs to the bacterial ribosomal protein bS6 family.

Functionally, binds together with bS18 to 16S ribosomal RNA. The chain is Small ribosomal subunit protein bS6 from Shewanella denitrificans (strain OS217 / ATCC BAA-1090 / DSM 15013).